We begin with the raw amino-acid sequence, 158 residues long: Cytochrome c-type biogenesis protein CcmE (158 aa).

Residues 1-8 are Cytoplasmic-facing; it reads MMRHRNRR. A helical; Signal-anchor for type II membrane protein transmembrane segment spans residues 9–29; sequence LATIAASAIVLVVAVGLGLMA. Residues 30–158 lie on the Periplasmic side of the membrane; sequence LRSAVVFFYS…PSAAGDGDSR (129 aa). Heme contacts are provided by His-123 and Tyr-127. The segment at 139–158 is disordered; that stretch reads AGVWQGEGETPSAAGDGDSR.

This sequence belongs to the CcmE/CycJ family.

It is found in the cell inner membrane. Heme chaperone required for the biogenesis of c-type cytochromes. Transiently binds heme delivered by CcmC and transfers the heme to apo-cytochromes in a process facilitated by CcmF and CcmH. The polypeptide is Cytochrome c-type biogenesis protein CcmE (Maricaulis maris (strain MCS10) (Caulobacter maris)).